A 983-amino-acid polypeptide reads, in one-letter code: Nuclear factor NF-kappa-B p105 subunit (983 aa).

The RHD domain occupies 47-372 (PYLQIIEQPK…EVQRKRQKLM (326 aa)). Position 66 is an S-nitrosocysteine (Cys66). Ser342 carries the post-translational modification Phosphoserine; by PKA. Positions 365–370 (QRKRQK) match the Nuclear localization signal motif. Residues 377 to 397 (DGYGGGSGAGGGGMFGGGGGG) are GRR. A disordered region spans residues 423-454 (KSNAGMKHELSNSTVKKDEESSDKQSDKWDTK). The span at 428 to 454 (MKHELSNSTVKKDEESSDKQSDKWDTK) shows a compositional bias: basic and acidic residues. ANK repeat units follow at residues 540–569 (NGDNVLHLSIIHLHRELVKNLLEVMPDMNY), 579–608 (LYQTPLHLAVITKQAEVVEDLLKAGANVNL), 612–641 (HGNSVLHLAAAEGDDKILSLLLKHQKASSM), 648–677 (EGLSAIHMVVTANSLSCLKLLIAAGVDVNA), 682–712 (SGRTALHLAVEQENVPLAGCLLLEGDADVDS), 716–745 (DGTTPLHIAAGRGFTKLAAVLKAAGADPHV), and 769–799 (PGTTPLDMAANWEVYDILNGKPYIAAAAVSE). Residues 804 to 891 (QGPLRELNES…EAIEVIQKAL (88 aa)) enclose the Death domain. Ser938 carries the post-translational modification Phosphoserine.

In terms of assembly, active NF-kappa-B is a heterodimer of an about 50 kDa DNA-binding subunit and the weak DNA-binding subunit p65. Two heterodimers might form a labile tetramer. In terms of processing, generation of the NF-kappa-B p50 (Nuclear factor NF-kappa-B p50 subunit) transcription factor takes place both cotranslationally and post-translationally via non-mutually exclusive mechanisms. A cotranslational processing allows the production of both p50 and p105 (Nuclear factor NF-kappa-B p105 subunit) from a single NFKB1 mRNA. While translation occurs, the particular unfolded structure after the GRR repeat region acts as a substrate for the proteasome, promoting degradation of the C-terminus. The GRR acts as a proteasomal 'stop signal', protecting the region upstream of the GRR from degradation and promoting generation of p50. It is unclear if limited proteasome degradation during cotranslational processing depends on ubiquitination. NF-kappa-B p50 is also generated post-translationally following ubiquitination by the KPC complex, leading to limited processing by the proteasome downstream of the GRR region, thereby generating p50. Phosphorylation at the C-terminus by IKBKB/IKKB acts as a signal for ubiquitination and promotes either complete degradation or processing to generate the NF-kappa-B p50 (Nuclear factor NF-kappa-B p50 subunit). Phosphorylation at Ser-938 are required for BTRC/BTRCP-mediated ubiquitination and proteolysis. Phosphorylation at Ser-938 is also required for ubiquitination by the KPC complex and limited processing to generate NF-kappa-B p50 (Nuclear factor NF-kappa-B p50 subunit). Post-translationally, polyubiquitinated at multiple Lys residues in the C-terminus. Polyubiquitinated by the SCF(FBXW11) and SCF(BTRC) complexes following phosphorylation at Ser-938, leading to its complete degradation. In contrast, polyubiquitination by the KPC complex following phosphorylation at Ser-938 leads to limited proteosomal processing and generation of the active NF-kappa-B p50 (Nuclear factor NF-kappa-B p50 subunit). In terms of processing, S-nitrosylation of Cys-66 affects DNA binding. The covalent modification of cysteine by 15-deoxy-Delta12,14-prostaglandin-J2 is autocatalytic and reversible. It may occur as an alternative to other cysteine modifications, such as S-nitrosylation and S-palmitoylation.

Its subcellular location is the cytoplasm. The protein localises to the nucleus. In terms of biological role, P105 is the precursor of the active p50 subunit (Nuclear factor NF-kappa-B p50 subunit) of the nuclear factor NF-kappa-B. The precursor protein itself does not bind to DNA. Acts as a cytoplasmic retention of attached NF-kappa-B proteins by p105. Constitutes the active form, which associates with RELA/p65 to form the NF-kappa-B p65-p50 complex to form a transcription factor. Together with RELA/p65, binds to the kappa-B consensus sequence 5'-GGRNNYYCC-3', located in the enhancer region of genes involved in immune response and acute phase reactions. The polypeptide is Nuclear factor NF-kappa-B p105 subunit (NFKB1) (Gallus gallus (Chicken)).